The sequence spans 87 residues: Small ribosomal subunit protein bS20 (87 aa).

The disordered stretch occupies residues 1–26 (MANIKSAKKRAVQSEKARKHNASRRS).

It belongs to the bacterial ribosomal protein bS20 family.

Its function is as follows. Binds directly to 16S ribosomal RNA. This is Small ribosomal subunit protein bS20 from Klebsiella pneumoniae (strain 342).